We begin with the raw amino-acid sequence, 364 residues long: Probable endopolygalacturonase B (364 aa).

Positions methionine 1–alanine 20 are cleaved as a signal peptide. Positions alanine 21 to arginine 29 are excised as a propeptide. A disulfide bond links cysteine 32 and cysteine 47. N-linked (GlcNAc...) asparagine glycosylation is found at asparagine 138 and asparagine 141. PbH1 repeat units follow at residues serine 159 to serine 188, serine 189 to serine 210, glycine 211 to serine 231, valine 240 to threonine 261, valine 269 to glutamine 291, and threonine 303 to alanine 324. Catalysis depends on aspartate 203, which acts as the Proton donor. A disulfide bridge connects residues cysteine 205 and cysteine 221. Residue histidine 225 is part of the active site. A disulfide bridge connects residues cysteine 331 and cysteine 336. N-linked (GlcNAc...) asparagine glycosylation occurs at asparagine 338. Cysteine 355 and cysteine 364 are oxidised to a cystine.

It belongs to the glycosyl hydrolase 28 family.

The protein localises to the secreted. It catalyses the reaction (1,4-alpha-D-galacturonosyl)n+m + H2O = (1,4-alpha-D-galacturonosyl)n + (1,4-alpha-D-galacturonosyl)m.. Involved in maceration and soft-rotting of plant tissue. Hydrolyzes the 1,4-alpha glycosidic bonds of de-esterified pectate in the smooth region of the plant cell wall. In Aspergillus fumigatus (strain CBS 144.89 / FGSC A1163 / CEA10) (Neosartorya fumigata), this protein is Probable endopolygalacturonase B (pgaB).